The following is a 103-amino-acid chain: Small ribosomal subunit protein uS10 (103 aa).

Belongs to the universal ribosomal protein uS10 family. As to quaternary structure, part of the 30S ribosomal subunit.

Its function is as follows. Involved in the binding of tRNA to the ribosomes. In Neisseria meningitidis serogroup C / serotype 2a (strain ATCC 700532 / DSM 15464 / FAM18), this protein is Small ribosomal subunit protein uS10.